The primary structure comprises 420 residues: Zinc finger protein Pegasus (420 aa).

Residue K5 forms a Glycyl lysine isopeptide (Lys-Gly) (interchain with G-Cter in SUMO2) linkage. C2H2-type zinc fingers lie at residues 82–104 (LKCR…IRIH), 110–132 (HRCH…MRSH), and 138–161 (YKCE…RRKH). K185 is covalently cross-linked (Glycyl lysine isopeptide (Lys-Gly) (interchain with G-Cter in SUMO2)). 2 stretches are compositionally biased toward polar residues: residues 223 to 236 (QTDS…TTPT) and 262 to 273 (LSSLPPENQNPA). Disordered regions lie at residues 223–247 (QTDS…QELM) and 262–356 (LSSL…PALP). Positions 290 to 311 (QPSTQAVVSAVSASIPQSSSPT) are enriched in low complexity. A compositionally biased stretch (polar residues) spans 332-349 (SEPSAHTSTPSIGNSQPS). The segment at 364–387 (HHCQHCDMYFFADNILYTIHMGCH) adopts a C2H2-type 4; degenerate zinc-finger fold. The C2H2-type 5 zinc finger occupies 393–417 (FQCNICGCKCKNKYDFACHFARGQH).

Belongs to the Ikaros C2H2-type zinc-finger protein family. As to quaternary structure, self-associates. Interacts with other family members; IKZF1, IKZF2, IKZF3 and IKZF4.

Its subcellular location is the nucleus. Transcriptional repressor that binds the core 5'GNNTGTNG-3' DNA consensus sequence. Involved in megakaryocyte differentiation. This is Zinc finger protein Pegasus (IKZF5) from Pongo abelii (Sumatran orangutan).